Here is a 207-residue protein sequence, read N- to C-terminus: MKILVLASSSQRRIELLRKLGADFIVIPPRITERIYDDPAKTVLENAFSKANYALVYAPENSIIIGMDTVIFSHELGVIGKPTTIEEATHILKLLRGKWHSVYTGVYIIEKNNLKYKSFIEETRVKMRNFSDEELTLYISSLEPLMKAGGYAIQGLGALLIETIVGDYYNVVGIPITKLYITLKKYFGVDLLREAVRKRVVGKTRTI.

Asp68 serves as the catalytic Proton acceptor.

The protein belongs to the Maf family. YhdE subfamily. The cofactor is a divalent metal cation.

It localises to the cytoplasm. The enzyme catalyses dTTP + H2O = dTMP + diphosphate + H(+). It catalyses the reaction UTP + H2O = UMP + diphosphate + H(+). In terms of biological role, nucleoside triphosphate pyrophosphatase that hydrolyzes dTTP and UTP. May have a dual role in cell division arrest and in preventing the incorporation of modified nucleotides into cellular nucleic acids. This chain is dTTP/UTP pyrophosphatase, found in Staphylothermus marinus (strain ATCC 43588 / DSM 3639 / JCM 9404 / F1).